We begin with the raw amino-acid sequence, 315 residues long: Ribosomal RNA small subunit methyltransferase H (315 aa).

Residues 37 to 39, aspartate 57, phenylalanine 83, aspartate 105, and glutamine 112 each bind S-adenosyl-L-methionine; that span reads GGH.

The protein belongs to the methyltransferase superfamily. RsmH family.

It is found in the cytoplasm. The catalysed reaction is cytidine(1402) in 16S rRNA + S-adenosyl-L-methionine = N(4)-methylcytidine(1402) in 16S rRNA + S-adenosyl-L-homocysteine + H(+). Specifically methylates the N4 position of cytidine in position 1402 (C1402) of 16S rRNA. In Pseudomonas putida (strain ATCC 47054 / DSM 6125 / CFBP 8728 / NCIMB 11950 / KT2440), this protein is Ribosomal RNA small subunit methyltransferase H.